A 469-amino-acid chain; its full sequence is Tryptophan biosynthesis protein TrpCF (469 aa).

Positions methionine 1–glutamate 271 are indole-3-glycerol phosphate synthase. Positions histidine 272–tyrosine 469 are N-(5'-phosphoribosyl)anthranilate isomerase.

This sequence in the N-terminal section; belongs to the TrpC family. The protein in the C-terminal section; belongs to the TrpF family. In terms of assembly, monomer.

The catalysed reaction is N-(5-phospho-beta-D-ribosyl)anthranilate = 1-(2-carboxyphenylamino)-1-deoxy-D-ribulose 5-phosphate. It carries out the reaction 1-(2-carboxyphenylamino)-1-deoxy-D-ribulose 5-phosphate + H(+) = (1S,2R)-1-C-(indol-3-yl)glycerol 3-phosphate + CO2 + H2O. Its pathway is amino-acid biosynthesis; L-tryptophan biosynthesis; L-tryptophan from chorismate: step 3/5. The protein operates within amino-acid biosynthesis; L-tryptophan biosynthesis; L-tryptophan from chorismate: step 4/5. In terms of biological role, bifunctional enzyme that catalyzes two sequential steps of tryptophan biosynthetic pathway. The first reaction is catalyzed by the isomerase, coded by the TrpF domain; the second reaction is catalyzed by the synthase, coded by the TrpC domain. The protein is Tryptophan biosynthesis protein TrpCF (trpCF) of Vibrio cholerae serotype O1 (strain ATCC 39315 / El Tor Inaba N16961).